The primary structure comprises 162 residues: SsrA-binding protein (162 aa).

Belongs to the SmpB family.

It localises to the cytoplasm. In terms of biological role, required for rescue of stalled ribosomes mediated by trans-translation. Binds to transfer-messenger RNA (tmRNA), required for stable association of tmRNA with ribosomes. tmRNA and SmpB together mimic tRNA shape, replacing the anticodon stem-loop with SmpB. tmRNA is encoded by the ssrA gene; the 2 termini fold to resemble tRNA(Ala) and it encodes a 'tag peptide', a short internal open reading frame. During trans-translation Ala-aminoacylated tmRNA acts like a tRNA, entering the A-site of stalled ribosomes, displacing the stalled mRNA. The ribosome then switches to translate the ORF on the tmRNA; the nascent peptide is terminated with the 'tag peptide' encoded by the tmRNA and targeted for degradation. The ribosome is freed to recommence translation, which seems to be the essential function of trans-translation. In Colwellia psychrerythraea (strain 34H / ATCC BAA-681) (Vibrio psychroerythus), this protein is SsrA-binding protein.